The sequence spans 71 residues: Ceratotoxin-A (71 aa).

The N-terminal stretch at 1–23 (MANLKAVFLICIVAFIAFQCVVA) is a signal peptide. 2 propeptides span residues 24 to 35 (EPAAEDSIVVKR) and 65 to 71 (VAAGLVG).

Homomer of four to six subunits.

The protein resides in the secreted. Female-specific peptides with potent activity against Gram-positive and Gram-negative bacteria. They have as well hemolytic activity. This is Ceratotoxin-A (CTXA2) from Ceratitis capitata (Mediterranean fruit fly).